A 55-amino-acid chain; its full sequence is Large ribosomal subunit protein bL33A (55 aa).

This sequence belongs to the bacterial ribosomal protein bL33 family.

The chain is Large ribosomal subunit protein bL33A from Salinispora tropica (strain ATCC BAA-916 / DSM 44818 / JCM 13857 / NBRC 105044 / CNB-440).